The sequence spans 609 residues: UvrABC system protein C (609 aa).

Residues 15-92 form the GIY-YIG domain; sequence TGSGVYQIQD…IKQFRPRYNV (78 aa). A UVR domain is found at 202–237; that stretch reads DQVIIKLTERMEVASENLVFEEAAHYRDQIRQLRRL.

The protein belongs to the UvrC family. In terms of assembly, interacts with UvrB in an incision complex.

It localises to the cytoplasm. In terms of biological role, the UvrABC repair system catalyzes the recognition and processing of DNA lesions. UvrC both incises the 5' and 3' sides of the lesion. The N-terminal half is responsible for the 3' incision and the C-terminal half is responsible for the 5' incision. In Coxiella burnetii (strain Dugway 5J108-111), this protein is UvrABC system protein C.